A 375-amino-acid polypeptide reads, in one-letter code: 4-hydroxy-3-methylbut-2-en-1-yl diphosphate synthase (flavodoxin) (375 aa).

[4Fe-4S] cluster is bound by residues C268, C271, C303, and E310.

The protein belongs to the IspG family. It depends on [4Fe-4S] cluster as a cofactor.

The catalysed reaction is (2E)-4-hydroxy-3-methylbut-2-enyl diphosphate + oxidized [flavodoxin] + H2O + 2 H(+) = 2-C-methyl-D-erythritol 2,4-cyclic diphosphate + reduced [flavodoxin]. Its pathway is isoprenoid biosynthesis; isopentenyl diphosphate biosynthesis via DXP pathway; isopentenyl diphosphate from 1-deoxy-D-xylulose 5-phosphate: step 5/6. Its function is as follows. Converts 2C-methyl-D-erythritol 2,4-cyclodiphosphate (ME-2,4cPP) into 1-hydroxy-2-methyl-2-(E)-butenyl 4-diphosphate. The chain is 4-hydroxy-3-methylbut-2-en-1-yl diphosphate synthase (flavodoxin) from Bacillus velezensis (strain DSM 23117 / BGSC 10A6 / LMG 26770 / FZB42) (Bacillus amyloliquefaciens subsp. plantarum).